The chain runs to 634 residues: NRPS-independent siderophore synthetase rfs (634 aa).

Its function is as follows. NRPS-independent siderophore synthetase that catalyzes the rhizoferrin biosynthesis from citrate and diaminobutane via an ATP-dependent condensation of citrate with diaminobutane followed by the addition of a second citrate to the monocitryl-diaminobutane intermediate. Can also use as substrates the citrate and diaminobutane homologs oxaloacetic acid, diaminopropane, diaminobutane, diaminopentane, tricarballylic acid, hydroxylamine and ornithine. Forms only a mono-substituted intermediate with oxaloacetic acid and diaminopentane whereas both mono-citryl intermediates and full rhizoferrin derivatives were detected when diaminopropane, and ornithine were used as substrates. Tricarballylic acid only forms a rhizoferrin derivative, but no mono-substituted intermediate. The polypeptide is NRPS-independent siderophore synthetase rfs (Rhizopus delemar (strain RA 99-880 / ATCC MYA-4621 / FGSC 9543 / NRRL 43880) (Mucormycosis agent)).